A 127-amino-acid polypeptide reads, in one-letter code: Large ribosomal subunit protein bL21 (127 aa).

Belongs to the bacterial ribosomal protein bL21 family. As to quaternary structure, part of the 50S ribosomal subunit. Contacts protein L20.

Functionally, this protein binds to 23S rRNA in the presence of protein L20. The sequence is that of Large ribosomal subunit protein bL21 from Blochmanniella floridana.